We begin with the raw amino-acid sequence, 201 residues long: Urease accessory protein UreG (201 aa).

11–18 (GPVGSGKT) is a GTP binding site.

This sequence belongs to the SIMIBI class G3E GTPase family. UreG subfamily. As to quaternary structure, homodimer. UreD, UreF and UreG form a complex that acts as a GTP-hydrolysis-dependent molecular chaperone, activating the urease apoprotein by helping to assemble the nickel containing metallocenter of UreC. The UreE protein probably delivers the nickel.

It is found in the cytoplasm. Functionally, facilitates the functional incorporation of the urease nickel metallocenter. This process requires GTP hydrolysis, probably effectuated by UreG. In Synechococcus sp. (strain CC9902), this protein is Urease accessory protein UreG.